The primary structure comprises 146 residues: Hemoglobin subunit beta (146 aa).

Position 1 is an N-acetylvaline (V1). A Globin domain is found at 2 to 146 (HLTDGEKNAL…VANALAHKYH (145 aa)). The residue at position 44 (S44) is a Phosphoserine. Residue K59 is modified to N6-acetyllysine. Residue H63 participates in heme b binding. K82 carries the N6-acetyllysine modification. Position 92 (H92) interacts with heme b. S-nitrosocysteine is present on C93. Position 144 is an N6-acetyllysine (K144).

It belongs to the globin family. In terms of assembly, heterotetramer of two alpha chains and two beta chains. In terms of tissue distribution, red blood cells.

Its function is as follows. Involved in oxygen transport from the lung to the various peripheral tissues. This chain is Hemoglobin subunit beta, found in Otospermophilus beecheyi (California ground squirrel).